Consider the following 377-residue polypeptide: QLLEAAVVKVPLKKFKSIRETMKEKGLLGEFLRTHKYDPAWKYHFGDLSVSYEPMAYMDAAYFGEISIGTPPQNFLVLFDTGSSNLWVPSVYCQSQACTSHSRFNPSESSTYSTNGQTFSLQYGSGSLTGFFGYDTLTVQSIQVPNQEFGLSENEPGTNFVYAQFDGIMGLAYPTLSVDGATTAMQGMVQEGALTSPIFSVYLSDQQGSSGGAVVFGGVDSSLYTGQIYWAPVTQELYWQIGIEEFLIGGQASGWCSEGCQAIVDTGTSLLTVPQQYMSALLQATGAQEDEYGQFLVNCNSIQNLPTLTFIINGVEFPLPPSSYILNNNGYCTVGVEPTYLSAQNSQPLWILGDVFLRSYYSVYDLSNNRVGFATAA.

A signal peptide spans 1 to 5 (QLLEA). Propeptides (activation peptide) lie at residues 6–31 (AVVK…LGEF) and 32–48 (LRTH…FGDL). The Peptidase A1 domain maps to 62 to 374 (YFGEISIGTP…DLSNNRVGFA (313 aa)). Asp-80 is an active-site residue. 2 cysteine pairs are disulfide-bonded: Cys-93–Cys-98 and Cys-256–Cys-260. The active site involves Asp-265. A disulfide bond links Cys-299 and Cys-332.

It belongs to the peptidase A1 family. Each pepsinogen is converted to corresponding pepsin at pH 2.0 in part as a result of the release of a 47 AA activation segment and in part as a result of stepwise proteolytic cleavage via an intermediate form(s).

The protein localises to the secreted. The enzyme catalyses More restricted specificity than pepsin A, but shows preferential cleavage at Tyr-|-Xaa bonds. High activity on hemoglobin.. Its function is as follows. Hydrolyzes a variety of proteins. The chain is Gastricsin (PGC) from Macaca fuscata fuscata (Japanese macaque).